The chain runs to 431 residues: Enolase (431 aa).

Position 167 (Q167) interacts with (2R)-2-phosphoglycerate. Catalysis depends on E209, which acts as the Proton donor. The Mg(2+) site is built by D246, E289, and D316. Positions 341, 370, 371, and 392 each coordinate (2R)-2-phosphoglycerate. K341 (proton acceptor) is an active-site residue.

Belongs to the enolase family. Component of the RNA degradosome, a multiprotein complex involved in RNA processing and mRNA degradation. Mg(2+) serves as cofactor.

It localises to the cytoplasm. It is found in the secreted. The protein localises to the cell surface. It catalyses the reaction (2R)-2-phosphoglycerate = phosphoenolpyruvate + H2O. The protein operates within carbohydrate degradation; glycolysis; pyruvate from D-glyceraldehyde 3-phosphate: step 4/5. Functionally, catalyzes the reversible conversion of 2-phosphoglycerate (2-PG) into phosphoenolpyruvate (PEP). It is essential for the degradation of carbohydrates via glycolysis. This chain is Enolase, found in Hahella chejuensis (strain KCTC 2396).